Reading from the N-terminus, the 219-residue chain is Cytochrome b6 (219 aa).

Residues 32-52 (IFYCFGGIVLTAFIFQGASGF) form a helical membrane-spanning segment. Position 35 (cysteine 35) interacts with heme c. Heme b is bound by residues histidine 86 and histidine 100. 3 helical membrane passes run 90–110 (SGCM…TGGF), 116–136 (LTWI…VTGY), and 190–210 (IHTF…FSLL). Heme b-binding residues include histidine 191 and histidine 206.

This sequence belongs to the cytochrome b family. PetB subfamily. In terms of assembly, the 4 large subunits of the cytochrome b6-f complex are cytochrome b6, subunit IV (17 kDa polypeptide, PetD), cytochrome f and the Rieske protein, while the 4 small subunits are PetG, PetL, PetM and PetN. The complex functions as a dimer. Heme b is required as a cofactor. The cofactor is heme c.

The protein localises to the plastid. It localises to the chloroplast thylakoid membrane. Component of the cytochrome b6-f complex, which mediates electron transfer between photosystem II (PSII) and photosystem I (PSI), cyclic electron flow around PSI, and state transitions. The polypeptide is Cytochrome b6 (Heterocapsa triquetra (Dinoflagellate)).